The sequence spans 282 residues: Protoheme IX farnesyltransferase (282 aa).

9 helical membrane passes run 9–29 (LAKP…FLLA), 39–59 (LPLF…GCVF), 79–99 (LVTG…LLIL), 102–122 (LVLY…GFIV), 139–159 (VLGG…VVNI), 165–185 (LALF…IAML), 210–230 (IMLF…VLGS), 231–251 (ADLF…YKSI), and 261–281 (VFAK…CLTM).

Belongs to the UbiA prenyltransferase family. Protoheme IX farnesyltransferase subfamily.

It localises to the cell inner membrane. It carries out the reaction heme b + (2E,6E)-farnesyl diphosphate + H2O = Fe(II)-heme o + diphosphate. Its pathway is porphyrin-containing compound metabolism; heme O biosynthesis; heme O from protoheme: step 1/1. In terms of biological role, converts heme B (protoheme IX) to heme O by substitution of the vinyl group on carbon 2 of heme B porphyrin ring with a hydroxyethyl farnesyl side group. This is Protoheme IX farnesyltransferase from Francisella tularensis subsp. novicida (strain U112).